We begin with the raw amino-acid sequence, 394 residues long: Exodeoxyribonuclease 7 large subunit (394 aa).

The protein belongs to the XseA family. As to quaternary structure, heterooligomer composed of large and small subunits.

The protein resides in the cytoplasm. The enzyme catalyses Exonucleolytic cleavage in either 5'- to 3'- or 3'- to 5'-direction to yield nucleoside 5'-phosphates.. Bidirectionally degrades single-stranded DNA into large acid-insoluble oligonucleotides, which are then degraded further into small acid-soluble oligonucleotides. This chain is Exodeoxyribonuclease 7 large subunit, found in Thermotoga petrophila (strain ATCC BAA-488 / DSM 13995 / JCM 10881 / RKU-1).